Consider the following 264-residue polypeptide: 3-methyl-2-oxobutanoate hydroxymethyltransferase (264 aa).

Mg(2+) is bound by residues Asp41 and Asp80. Residues 41 to 42, Asp80, and Lys109 each bind 3-methyl-2-oxobutanoate; that span reads DS. Glu111 is a binding site for Mg(2+). The active-site Proton acceptor is Glu178.

The protein belongs to the PanB family. Homodecamer; pentamer of dimers. Requires Mg(2+) as cofactor.

The protein localises to the cytoplasm. The enzyme catalyses 3-methyl-2-oxobutanoate + (6R)-5,10-methylene-5,6,7,8-tetrahydrofolate + H2O = 2-dehydropantoate + (6S)-5,6,7,8-tetrahydrofolate. The protein operates within cofactor biosynthesis; (R)-pantothenate biosynthesis; (R)-pantoate from 3-methyl-2-oxobutanoate: step 1/2. Functionally, catalyzes the reversible reaction in which hydroxymethyl group from 5,10-methylenetetrahydrofolate is transferred onto alpha-ketoisovalerate to form ketopantoate. The protein is 3-methyl-2-oxobutanoate hydroxymethyltransferase of Thermosipho melanesiensis (strain DSM 12029 / CIP 104789 / BI429).